The sequence spans 37 residues: Large ribosomal subunit protein bL36 (37 aa).

Belongs to the bacterial ribosomal protein bL36 family.

The sequence is that of Large ribosomal subunit protein bL36 from Marinobacter nauticus (strain ATCC 700491 / DSM 11845 / VT8) (Marinobacter aquaeolei).